The primary structure comprises 189 residues: MRAKQTVVVSLGQRVCGAVSLNPPGVKSSVKKAAKRRVLLQRSAPDIARAVRQMAGDGGEAKRLPKRPFHGEVEENSSAAVDGNVKIQPGKKAPGERRGKENSAAKCTGLTSGSAEAKMEQSVHGSQTTDPSVFFDEDSNHVFPVEQFFGNLDVVEDYPRRTPGSKRMTRREYRSMHYYAKEDSEEEHL.

Residues 53–137 form a disordered region; it reads QMAGDGGEAK…TTDPSVFFDE (85 aa). Basic and acidic residues-rich tracts occupy residues 59 to 73 and 93 to 103; these read GEAK…HGEV and APGERRGKENS.

It belongs to the UPF0688 family.

It localises to the nucleus. This is UPF0688 protein C1orf174 homolog from Danio rerio (Zebrafish).